The following is a 175-amino-acid chain: Large ribosomal subunit protein uL10 (175 aa).

This sequence belongs to the universal ribosomal protein uL10 family. As to quaternary structure, part of the ribosomal stalk of the 50S ribosomal subunit. The N-terminus interacts with L11 and the large rRNA to form the base of the stalk. The C-terminus forms an elongated spine to which L12 dimers bind in a sequential fashion forming a multimeric L10(L12)X complex.

Its function is as follows. Forms part of the ribosomal stalk, playing a central role in the interaction of the ribosome with GTP-bound translation factors. The protein is Large ribosomal subunit protein uL10 of Prochlorococcus marinus (strain SARG / CCMP1375 / SS120).